The chain runs to 362 residues: Histidinol-phosphate aminotransferase (362 aa).

Position 218 is an N6-(pyridoxal phosphate)lysine (K218).

Belongs to the class-II pyridoxal-phosphate-dependent aminotransferase family. Histidinol-phosphate aminotransferase subfamily. As to quaternary structure, homodimer. Requires pyridoxal 5'-phosphate as cofactor.

It carries out the reaction L-histidinol phosphate + 2-oxoglutarate = 3-(imidazol-4-yl)-2-oxopropyl phosphate + L-glutamate. Its pathway is amino-acid biosynthesis; L-histidine biosynthesis; L-histidine from 5-phospho-alpha-D-ribose 1-diphosphate: step 7/9. The polypeptide is Histidinol-phosphate aminotransferase (Xanthomonas campestris pv. campestris (strain 8004)).